The following is a 533-amino-acid chain: Flavin-containing monooxygenase 5 (533 aa).

A Dimethylated arginine modification is found at arginine 5. Residues 10-14, glutamate 33, and 41-42 each bind FAD; these read GAGAS and LW. Position 54 is a phosphoserine (serine 54). Tyrosine 56 is subject to Phosphotyrosine. Serine 58 carries the post-translational modification Phosphoserine. 62-63 contacts FAD; that stretch reads NT. NADP(+) is bound at residue 196-199; that stretch reads SGGD. Serine 280 bears the Phosphoserine mark. Threonine 284 carries the phosphothreonine modification. Serine 401 bears the Phosphoserine mark. The helical transmembrane segment at 513–533 threads the bilayer; that stretch reads LVTVRVLMLAVAFFAVILAYF.

Belongs to the FMO family. It depends on FAD as a cofactor. As to expression, expressed in liver (at protein level). Expressed in the mucosal epithelium of the gastrointestinal tract.

The protein localises to the microsome membrane. Its subcellular location is the endoplasmic reticulum membrane. The catalysed reaction is N,N-dimethylaniline + NADPH + O2 + H(+) = N,N-dimethylaniline N-oxide + NADP(+) + H2O. It catalyses the reaction NADPH + O2 + H(+) = H2O2 + NADP(+). The enzyme catalyses heptan-2-one + NADPH + O2 + H(+) = pentyl acetate + NADP(+) + H2O. It carries out the reaction octan-3-one + NADPH + O2 + H(+) = pentyl propanoate + NADP(+) + H2O. The catalysed reaction is octan-3-one + NADPH + O2 + H(+) = ethyl hexanoate + NADP(+) + H2O. It catalyses the reaction hexan-3-one + NADPH + O2 + H(+) = ethyl butanoate + NADP(+) + H2O. The enzyme catalyses hexan-3-one + NADPH + O2 + H(+) = propyl propanoate + NADP(+) + H2O. It carries out the reaction heptan-4-one + NADPH + O2 + H(+) = propyl butanoate + NADP(+) + H2O. The catalysed reaction is (2E)-geranial + NADPH + O2 + H(+) = (1E)-2,6-dimethylhepta-1,5-dien-1-yl formate + NADP(+) + H2O. It catalyses the reaction sulcatone + NADPH + O2 + H(+) = 4-methylpent-3-en-1-yl acetate + NADP(+) + H2O. Acts as a Baeyer-Villiger monooxygenase on a broad range of substrates. Catalyzes the insertion of an oxygen atom into a carbon-carbon bond adjacent to a carbonyl, which converts ketones to esters. Active on diverse carbonyl compounds, whereas soft nucleophiles are mostly non- or poorly reactive. In contrast with other forms of FMO it is non- or poorly active on 'classical' substrates such as drugs, pesticides, and dietary components containing soft nucleophilic heteroatoms. Able to oxidize drug molecules bearing a carbonyl group on an aliphatic chain, such as nabumetone and pentoxifylline. Also, in the absence of substrates, shows slow but yet significant NADPH oxidase activity. Acts as a positive modulator of cholesterol biosynthesis as well as glucose homeostasis, promoting metabolic aging via pleiotropic effects. The polypeptide is Flavin-containing monooxygenase 5 (Mus musculus (Mouse)).